A 309-amino-acid polypeptide reads, in one-letter code: tRNA-cytidine(32) 2-sulfurtransferase (309 aa).

Residues 47-52 (SGGKDS) carry the PP-loop motif motif. [4Fe-4S] cluster is bound by residues Cys-122, Cys-125, and Cys-213.

This sequence belongs to the TtcA family. As to quaternary structure, homodimer. The cofactor is Mg(2+). [4Fe-4S] cluster is required as a cofactor.

It localises to the cytoplasm. It carries out the reaction cytidine(32) in tRNA + S-sulfanyl-L-cysteinyl-[cysteine desulfurase] + AH2 + ATP = 2-thiocytidine(32) in tRNA + L-cysteinyl-[cysteine desulfurase] + A + AMP + diphosphate + H(+). It participates in tRNA modification. Functionally, catalyzes the ATP-dependent 2-thiolation of cytidine in position 32 of tRNA, to form 2-thiocytidine (s(2)C32). The sulfur atoms are provided by the cysteine/cysteine desulfurase (IscS) system. This Erwinia tasmaniensis (strain DSM 17950 / CFBP 7177 / CIP 109463 / NCPPB 4357 / Et1/99) protein is tRNA-cytidine(32) 2-sulfurtransferase.